The sequence spans 158 residues: Regulator of sigma D (158 aa).

The protein belongs to the Rsd/AlgQ family. Interacts with RpoD.

Its subcellular location is the cytoplasm. In terms of biological role, binds RpoD and negatively regulates RpoD-mediated transcription activation by preventing the interaction between the primary sigma factor RpoD with the catalytic core of the RNA polymerase and with promoter DNA. May be involved in replacement of the RNA polymerase sigma subunit from RpoD to RpoS during the transition from exponential growth to the stationary phase. The protein is Regulator of sigma D of Escherichia coli O6:H1 (strain CFT073 / ATCC 700928 / UPEC).